Consider the following 234-residue polypeptide: Flagellar L-ring protein (234 aa).

The first 15 residues, 1–15 (MRYAVICMLLLAASG), serve as a signal peptide directing secretion. Residue cysteine 16 is the site of N-palmitoyl cysteine attachment. The S-diacylglycerol cysteine moiety is linked to residue cysteine 16.

This sequence belongs to the FlgH family. As to quaternary structure, the basal body constitutes a major portion of the flagellar organelle and consists of four rings (L,P,S, and M) mounted on a central rod.

The protein localises to the cell outer membrane. The protein resides in the bacterial flagellum basal body. Its function is as follows. Assembles around the rod to form the L-ring and probably protects the motor/basal body from shearing forces during rotation. This is Flagellar L-ring protein from Oleidesulfovibrio alaskensis (strain ATCC BAA-1058 / DSM 17464 / G20) (Desulfovibrio alaskensis).